A 210-amino-acid chain; its full sequence is Small ribosomal subunit protein uS3 (210 aa).

A KH type-2 domain is found at 39 to 107; that stretch reads IREKLMEKLK…EILLDIQEVK (69 aa).

The protein belongs to the universal ribosomal protein uS3 family. As to quaternary structure, part of the 30S ribosomal subunit. Forms a tight complex with proteins S10 and S14.

Its function is as follows. Binds the lower part of the 30S subunit head. Binds mRNA in the 70S ribosome, positioning it for translation. This chain is Small ribosomal subunit protein uS3, found in Opitutus terrae (strain DSM 11246 / JCM 15787 / PB90-1).